A 507-amino-acid chain; its full sequence is RNA polymerase I-specific transcription initiation factor RRN11 (507 aa).

A compositionally biased stretch (polar residues) spans 37 to 47 (KSTTTDSLPTP). Disordered regions lie at residues 37-76 (KSTT…LQQK) and 89-124 (GEIY…SDEE). A compositionally biased stretch (acidic residues) spans 97 to 108 (SETDSQEEETEE). Over residues 109 to 124 (GGEHDTGIDKEDSDEE) the composition is skewed to basic and acidic residues.

As to quaternary structure, component of the core factor (CF) complex, which consists of RRN6, RRN7 and RRN11. The CF heterotrimer may further dimerize to form a hexamer. RRN11 interacts with RRN6, RRN7 and SPT15.

The protein localises to the nucleus. It localises to the nucleolus. Its function is as follows. Acts as a component of the core factor (CF) complex which is essential for the initiation of rDNA transcription by RNA polymerase I. After binding of UAF (upstream activation factor) to an upstream element of the promoter, CF is recruited in a SPT15/TBP-dependent manner to form a preinitiation complex. This chain is RNA polymerase I-specific transcription initiation factor RRN11 (RRN11), found in Saccharomyces cerevisiae (strain ATCC 204508 / S288c) (Baker's yeast).